The primary structure comprises 337 residues: ATP-dependent 6-phosphofructokinase (337 aa).

An ATP-binding site is contributed by glycine 11. 21 to 25 (RAVVR) lines the ADP pocket. ATP contacts are provided by residues 72 to 73 (RY) and 102 to 105 (GDGS). Aspartate 103 is a binding site for Mg(2+). 125-127 (TID) provides a ligand contact to substrate. Aspartate 127 serves as the catalytic Proton acceptor. Position 154 (arginine 154) interacts with ADP. Substrate contacts are provided by residues arginine 162 and 169–171 (MGR). ADP contacts are provided by residues 185–187 (GAD) and 214–216 (KNH). Substrate contacts are provided by residues glutamate 223, arginine 245, and 251 to 254 (HILR).

The protein belongs to the phosphofructokinase type A (PFKA) family. ATP-dependent PFK group I subfamily. Prokaryotic clade 'B1' sub-subfamily. Homotetramer. It depends on Mg(2+) as a cofactor.

The protein localises to the cytoplasm. The catalysed reaction is beta-D-fructose 6-phosphate + ATP = beta-D-fructose 1,6-bisphosphate + ADP + H(+). The protein operates within carbohydrate degradation; glycolysis; D-glyceraldehyde 3-phosphate and glycerone phosphate from D-glucose: step 3/4. With respect to regulation, allosterically activated by ADP and other diphosphonucleosides, and allosterically inhibited by phosphoenolpyruvate. Functionally, catalyzes the phosphorylation of D-fructose 6-phosphate to fructose 1,6-bisphosphate by ATP, the first committing step of glycolysis. The polypeptide is ATP-dependent 6-phosphofructokinase (Streptococcus uberis (strain ATCC BAA-854 / 0140J)).